Reading from the N-terminus, the 297-residue chain is Large ribosomal subunit protein uL18 (297 aa).

Residues 258-267 are compositionally biased toward basic residues; it reads KKAHPKKRWT. The segment at 258–277 is disordered; that stretch reads KKAHPKKRWTEKKLTREQRQ. Residues 268–277 are compositionally biased toward basic and acidic residues; that stretch reads EKKLTREQRQ.

This sequence belongs to the universal ribosomal protein uL18 family. In terms of assembly, component of the large ribosomal subunit (LSU).

The protein resides in the cytoplasm. It is found in the nucleus. In terms of biological role, component of the ribosome, a large ribonucleoprotein complex responsible for the synthesis of proteins in the cell. The small ribosomal subunit (SSU) binds messenger RNAs (mRNAs) and translates the encoded message by selecting cognate aminoacyl-transfer RNA (tRNA) molecules. The large subunit (LSU) contains the ribosomal catalytic site termed the peptidyl transferase center (PTC), which catalyzes the formation of peptide bonds, thereby polymerizing the amino acids delivered by tRNAs into a polypeptide chain. The nascent polypeptides leave the ribosome through a tunnel in the LSU and interact with protein factors that function in enzymatic processing, targeting, and the membrane insertion of nascent chains at the exit of the ribosomal tunnel. This is Large ribosomal subunit protein uL18 (RPL5A) from Helianthus annuus (Common sunflower).